The sequence spans 263 residues: Phosphoinositide-3-kinase-interacting protein 1 (263 aa).

The N-terminal stretch at 1–21 is a signal peptide; the sequence is MLLAWVQAFLVSNMLLAEAYG. At 22 to 168 the chain is on the extracellular side; that stretch reads SGGCFWDNGH…NSKEKKDLGT (147 aa). A Kringle domain is found at 24 to 101; the sequence is GCFWDNGHLY…EKRPCENLSC (78 aa). 3 disulfides stabilise this stretch: Cys-25/Cys-101, Cys-46/Cys-82, and Cys-70/Cys-96. N-linked (GlcNAc...) asparagine glycosylation is present at Asn-98. The helical transmembrane segment at 169 to 189 threads the bilayer; it reads LGYVLGITMMVIIVAIGAGII. At 190 to 263 the chain is on the cytoplasmic side; that stretch reads LGYSYKRGKD…LMGQAGTPGA (74 aa). Positions 242–251 are enriched in polar residues; that stretch reads QTPVDPQEGS. A disordered region spans residues 242-263; it reads QTPVDPQEGSTPLMGQAGTPGA.

It is found in the cell membrane. In terms of biological role, negative regulator of hepatic phosphatidylinositol 3-kinase (PI3K) activity. The protein is Phosphoinositide-3-kinase-interacting protein 1 (PIK3IP1) of Pongo abelii (Sumatran orangutan).